Consider the following 324-residue polypeptide: D-alanine--D-alanine ligase (324 aa).

The region spanning 121–321 (NQYLKAFGVR…IKDVMTDIIE (201 aa)) is the ATP-grasp domain. 149-204 (VEKIGLPCFIKPNLGGSSFGVTKVKTREQIQPAIAKAFSEAEEVMIEAFMGGTELT) contacts ATP. 3 residues coordinate Mg(2+): D275, E288, and N290.

It belongs to the D-alanine--D-alanine ligase family. Mg(2+) serves as cofactor. The cofactor is Mn(2+).

The protein localises to the cytoplasm. The catalysed reaction is 2 D-alanine + ATP = D-alanyl-D-alanine + ADP + phosphate + H(+). It participates in cell wall biogenesis; peptidoglycan biosynthesis. Its function is as follows. Cell wall formation. The sequence is that of D-alanine--D-alanine ligase from Bacteroides fragilis (strain YCH46).